Consider the following 273-residue polypeptide: Cysteine protease S273R (273 aa).

Active-site residues include histidine 168 and asparagine 187. Substrate is bound at residue glutamine 226. Cysteine 232 (nucleophile) is an active-site residue.

This sequence belongs to the peptidase C63 family.

The protein resides in the host cytoplasm. It localises to the virion. In terms of biological role, cysteine protease that plays several role during infection including processing of the structural polyprotein or inhibition of the host immune response. Catalyzes the maturation of the pp220 and pp62 polyprotein precursors into core-shell proteins. Plays a role in the disruption of host pyroptosis via specific cleavage of gasdermin D/GSDMD. In addition, strongly decreases the host cGAS-STING signaling by targeting IKBKE via its enzymatic activity. Also impairs host FOXJ1-mediated antiviral effect via degradation of FOXJ1. Cleaves host G3BP1 inducing loss of stress granules formation. Interacts with and induces the degradation of host STAT2 via polyubiquitination of the latter. This is Cysteine protease S273R from Ornithodoros (relapsing fever ticks).